The sequence spans 200 residues: 3-isopropylmalate dehydratase small subunit (200 aa).

It belongs to the LeuD family. LeuD type 1 subfamily. Heterodimer of LeuC and LeuD.

The enzyme catalyses (2R,3S)-3-isopropylmalate = (2S)-2-isopropylmalate. The protein operates within amino-acid biosynthesis; L-leucine biosynthesis; L-leucine from 3-methyl-2-oxobutanoate: step 2/4. Catalyzes the isomerization between 2-isopropylmalate and 3-isopropylmalate, via the formation of 2-isopropylmaleate. This chain is 3-isopropylmalate dehydratase small subunit, found in Aliivibrio fischeri (strain MJ11) (Vibrio fischeri).